We begin with the raw amino-acid sequence, 362 residues long: Probable tocopherol O-methyltransferase, chloroplastic (362 aa).

A chloroplast-targeting transit peptide spans 1–55; it reads MAHAAAATGALAPLHPLLRCTSRHLCASASPRAGLCLHHHRRRRRSSRRTKLAVR. The segment at 141 to 150 is SAM motif I; that stretch reads VVDVGCGIGG. Residues 204–212 are SAM motif II; that stretch reads GQFDLVWSM. The tract at residues 231 to 240 is SAM motif III; that stretch reads VAAPGARIII.

Belongs to the class I-like SAM-binding methyltransferase superfamily. gTMT family.

Its subcellular location is the plastid. It localises to the chloroplast. It catalyses the reaction gamma-tocopherol + S-adenosyl-L-methionine = (+)-alpha-tocopherol + S-adenosyl-L-homocysteine + H(+). The catalysed reaction is delta-tocotrienol + S-adenosyl-L-methionine = beta-tocotrienol + S-adenosyl-L-homocysteine + H(+). It carries out the reaction gamma-tocotrienol + S-adenosyl-L-methionine = alpha-tocotrienol + S-adenosyl-L-homocysteine + H(+). The enzyme catalyses delta-tocopherol + S-adenosyl-L-methionine = beta-tocopherol + S-adenosyl-L-homocysteine + H(+). It participates in cofactor biosynthesis; tocopherol biosynthesis. Functionally, involved in the synthesis of tocopherol (vitamin E). Methylates gamma- and delta-tocopherol to form beta- and alpha-tocopherol, respectively. The polypeptide is Probable tocopherol O-methyltransferase, chloroplastic (VTE4) (Oryza sativa subsp. japonica (Rice)).